We begin with the raw amino-acid sequence, 288 residues long: Polyamine aminopropyltransferase (288 aa).

Residues 9–238 form the PABS domain; the sequence is ETLHDQFGQY…GIMTFAWATD (230 aa). Q33 contributes to the S-methyl-5'-thioadenosine binding site. Spermidine contacts are provided by H64 and D88. Residues E108 and 140-141 each bind S-methyl-5'-thioadenosine; that span reads DG. D158 serves as the catalytic Proton acceptor. 158-161 contributes to the spermidine binding site; sequence DCTD. P165 contacts S-methyl-5'-thioadenosine.

The protein belongs to the spermidine/spermine synthase family. Homodimer or homotetramer.

Its subcellular location is the cytoplasm. It catalyses the reaction S-adenosyl 3-(methylsulfanyl)propylamine + putrescine = S-methyl-5'-thioadenosine + spermidine + H(+). The protein operates within amine and polyamine biosynthesis; spermidine biosynthesis; spermidine from putrescine: step 1/1. Functionally, catalyzes the irreversible transfer of a propylamine group from the amino donor S-adenosylmethioninamine (decarboxy-AdoMet) to putrescine (1,4-diaminobutane) to yield spermidine. In Escherichia coli O81 (strain ED1a), this protein is Polyamine aminopropyltransferase.